The following is a 177-amino-acid chain: UBA-like domain-containing protein 1 (177 aa).

The tract at residues 89 to 177 (ESFHSGGSGS…RAHPAMEAER (89 aa)) is disordered. Low complexity predominate over residues 112 to 138 (PHAATSSSAASSWPTAASPPGGPQHHQ). The span at 139-151 (PQPPLWTPTPPSP) shows a compositional bias: pro residues. Residues 167–177 (PRAHPAMEAER) are compositionally biased toward basic and acidic residues.

It belongs to the UBALD family.

This Homo sapiens (Human) protein is UBA-like domain-containing protein 1 (UBALD1).